Here is a 278-residue protein sequence, read N- to C-terminus: MKTKTDFLKMKEQGEPITMLTAYDYPSAKLAEEAEVDMILVGDSLGMVVLGYDSTVPVTVEDMIHHTKAVRRGAKETFIVTDMPFMSYHVSLQETMVNARRIVQESGAHALKVEGAGEVISTIQYLTNAGIPVVAHLGLTPQSVGVLGGYKVQGKDAESAKKLIEDAKKCEEAGAIALVLECVPMQLAELISEQLTIPTIGIGAGQKVDGQVLVYHDLISYGVNRVPKFVKQYTSVQEEIVRGISQYVTEVKTRQFPEEKHSFTMKEEECLSLYGGKQ.

The Mg(2+) site is built by D43 and D82. 3-methyl-2-oxobutanoate-binding positions include 43-44 (DS), D82, and K112. E114 serves as a coordination point for Mg(2+). E181 serves as the catalytic Proton acceptor.

It belongs to the PanB family. In terms of assembly, homodecamer; pentamer of dimers. Requires Mg(2+) as cofactor.

The protein localises to the cytoplasm. It catalyses the reaction 3-methyl-2-oxobutanoate + (6R)-5,10-methylene-5,6,7,8-tetrahydrofolate + H2O = 2-dehydropantoate + (6S)-5,6,7,8-tetrahydrofolate. It functions in the pathway cofactor biosynthesis; (R)-pantothenate biosynthesis; (R)-pantoate from 3-methyl-2-oxobutanoate: step 1/2. In terms of biological role, catalyzes the reversible reaction in which hydroxymethyl group from 5,10-methylenetetrahydrofolate is transferred onto alpha-ketoisovalerate to form ketopantoate. The polypeptide is 3-methyl-2-oxobutanoate hydroxymethyltransferase (Bacillus cereus (strain ATCC 14579 / DSM 31 / CCUG 7414 / JCM 2152 / NBRC 15305 / NCIMB 9373 / NCTC 2599 / NRRL B-3711)).